Reading from the N-terminus, the 346-residue chain is Serpentine receptor class beta-11 (346 aa).

7 helical membrane-spanning segments follow: residues 26–46 (YQMI…LFKL), 57–77 (TIFI…LTTS), 102–122 (IWNF…CSVT), 139–159 (SVVM…CIIF), 186–206 (FTFF…DLIL), 239–259 (VFLI…VVFF), and 278–298 (TFST…SSFF).

Belongs to the nematode receptor-like protein srb family.

Its subcellular location is the membrane. In Caenorhabditis elegans, this protein is Serpentine receptor class beta-11 (srb-11).